Here is a 724-residue protein sequence, read N- to C-terminus: Protein BCH1 (724 aa).

Residues 51–65 are compositionally biased toward low complexity; that stretch reads TTATASANDNGATSN. Residues 51–71 are disordered; that stretch reads TTATASANDNGATSNINGQDP. Residues 711-724 are CHS5-binding; the sequence is LNFLKNFTNDTFDN.

This sequence belongs to the CHAPS family. In terms of assembly, component of the CHS5/6 complex composed of the 4 CHAPS proteins BCH1, BCH2, BUD7, and CHS6 as well as at least CHS5 and GTP-bound ARF1. The complex interacts with the cargo protein CHS3.

It localises to the golgi apparatus. The protein resides in the trans-Golgi network membrane. Functionally, member of the CHS5-ARF1P-binding proteins (CHAPS) which mediates export of specific cargo proteins, including chitin synthase CHS3. The protein is Protein BCH1 (BCH1) of Saccharomyces cerevisiae (strain ATCC 204508 / S288c) (Baker's yeast).